A 213-amino-acid polypeptide reads, in one-letter code: LexA repressor (213 aa).

A DNA-binding region (H-T-H motif) is located at residues 27–47 (QTEIARAFGFKGIRAAQYHLE). Residues S133 and K170 each act as for autocatalytic cleavage activity in the active site.

This sequence belongs to the peptidase S24 family. In terms of assembly, homodimer.

It catalyses the reaction Hydrolysis of Ala-|-Gly bond in repressor LexA.. Represses a number of genes involved in the response to DNA damage (SOS response), including recA and lexA. Has been shown to bind to the palindromic sequence 5'-CTG-N(8-12)-C-[TC]-G. In the presence of single-stranded DNA, RecA interacts with LexA causing an autocatalytic cleavage which disrupts the DNA-binding part of LexA, leading to derepression of the SOS regulon and eventually DNA repair. This is LexA repressor from Xanthomonas citri (Xanthomonas campestris pv. citri).